A 409-amino-acid polypeptide reads, in one-letter code: Arginine deiminase (409 aa).

Cys-399 acts as the Amidino-cysteine intermediate in catalysis.

It belongs to the arginine deiminase family.

The protein localises to the cytoplasm. It catalyses the reaction L-arginine + H2O = L-citrulline + NH4(+). The protein operates within amino-acid degradation; L-arginine degradation via ADI pathway; carbamoyl phosphate from L-arginine: step 1/2. The polypeptide is Arginine deiminase (Streptococcus pneumoniae (strain JJA)).